The primary structure comprises 114 residues: Beta-microseminoprotein (114 aa).

An N-terminal signal peptide occupies residues 1–20 (MNVLLGGFVIFATFVTLCNA). Disulfide bonds link Cys22–Cys70, Cys38–Cys62, Cys57–Cys93, Cys60–Cys69, and Cys84–Cys107.

Belongs to the beta-microseminoprotein family. As to quaternary structure, homodimer; Interacts with PI16.

It is found in the secreted. The protein is Beta-microseminoprotein (MSMB) of Macaca mulatta (Rhesus macaque).